Reading from the N-terminus, the 421-residue chain is Histidine--tRNA ligase (421 aa).

The protein belongs to the class-II aminoacyl-tRNA synthetase family. Homodimer.

It localises to the cytoplasm. The enzyme catalyses tRNA(His) + L-histidine + ATP = L-histidyl-tRNA(His) + AMP + diphosphate + H(+). The sequence is that of Histidine--tRNA ligase from Francisella tularensis subsp. holarctica (strain FTNF002-00 / FTA).